The primary structure comprises 524 residues: Protein tweety homolog 3 (524 aa).

Residues 1 to 42 (MAGVSYAAPWWVSLLHRLPHFDLRWEATSSQFRPEDADYQQA) are Extracellular-facing. Residues 43-63 (LLLLGATALACLALDLLFLLF) form a helical membrane-spanning segment. Over 64–86 (YSFWLCCRRRKTDEHLDADCCCT) the chain is Cytoplasmic. Residues 87–107 (AWCVIITTLVCSAGIAVGFYG) form a helical membrane-spanning segment. At 108-211 (NGETSDGIHR…VDLYDWYRWL (104 aa)) the chain is on the extracellular side. Ca(2+) is bound by residues E110 and D113. 2 N-linked (GlcNAc...) asparagine glycosylation sites follow: N126 and N144. The helical transmembrane segment at 212–232 (GYLGLLLLDVIICLLVLVGLI) threads the bilayer. Residues 233–236 (RSSK) lie on the Cytoplasmic side of the membrane. Residues 237–257 (GILVGVCLLGVLALVISWGAL) form a helical membrane-spanning segment. Residues 258–386 (GLELAVSVGS…LTGFCYDGVE (129 aa)) lie on the Extracellular side of the membrane. Disulfide bonds link C271/C381 and C299/C366. N-linked (GlcNAc...) asparagine glycosylation is present at N351. A helical transmembrane segment spans residues 387–407 (GLIYLALFSFVTALMFSSIVC). Residues 408 to 524 (SIPHTWQQKR…PRPDSSGSGH (117 aa)) lie on the Cytoplasmic side of the membrane. 2 disordered regions span residues 413-435 (WQQK…RQAH) and 485-524 (RCEN…GSGH). Phosphoserine is present on S496. The PY-motif; mediates interaction with NEDD4L signature appears at 498 to 501 (PPSY). The segment covering 501–524 (YTSSMRAKYLATSQPRPDSSGSGH) has biased composition (polar residues). 2 positions are modified to phosphoserine: S504 and S522.

This sequence belongs to the tweety family. In terms of assembly, homotetramer; disulfide-linked. Forms cis-homodimers in the presence of Ca(2+). Interacts with NEDD4L. Ubiquitinated by NEDD4L. In terms of processing, N-glycosylated. As to expression, expressed in excitable tissues. Expressed in the brain, heart, skeletal muscle, colon, spleen, kidney and peripheral blood leukocytes. Also expressed in fat, the pancreas, thymus, and uterus.

Its subcellular location is the cell membrane. It carries out the reaction chloride(in) = chloride(out). The enzyme catalyses L-glutamate(out) = L-glutamate(in). With respect to regulation, inhibited by (4-[(2-butyl-6,7-dichloro-2- cyclopentyl-2,3-dihydro-1-oxo-1H-inden-5-yl)oxy]butanoic acid), genistein and PD98059 (MEK1 inhibitor). Its function is as follows. Calcium-independent, swelling-dependent volume-regulated anion channel (VRAC-swell) which plays a pivotal role in the process of regulatory volume decrease (RVD) in the brain through the efflux of anions like chloride and organic osmolytes like glutamate. Probable large-conductance Ca(2+)-activated chloride channel. The chain is Protein tweety homolog 3 (Ttyh3) from Mus musculus (Mouse).